A 128-amino-acid chain; its full sequence is uncharacterized protein (128 aa).

This is an uncharacterized protein from Bacillus subtilis (strain 168).